The following is a 275-amino-acid chain: Large ribosomal subunit protein uL2 (275 aa).

The disordered stretch occupies residues 214-275 (RWRGNRPTVR…NKFILSHRNK (62 aa)). The segment covering 255 to 275 (KGKKTRSNKRTNKFILSHRNK) has biased composition (basic residues).

This sequence belongs to the universal ribosomal protein uL2 family. In terms of assembly, part of the 50S ribosomal subunit. Forms a bridge to the 30S subunit in the 70S ribosome.

Functionally, one of the primary rRNA binding proteins. Required for association of the 30S and 50S subunits to form the 70S ribosome, for tRNA binding and peptide bond formation. It has been suggested to have peptidyltransferase activity; this is somewhat controversial. Makes several contacts with the 16S rRNA in the 70S ribosome. This is Large ribosomal subunit protein uL2 from Blochmanniella pennsylvanica (strain BPEN).